We begin with the raw amino-acid sequence, 136 residues long: Holo-[acyl-carrier-protein] synthase (136 aa).

Residues Asp7 and Glu53 each coordinate Mg(2+).

It belongs to the P-Pant transferase superfamily. AcpS family. It depends on Mg(2+) as a cofactor.

The protein localises to the cytoplasm. The enzyme catalyses apo-[ACP] + CoA = holo-[ACP] + adenosine 3',5'-bisphosphate + H(+). Its function is as follows. Transfers the 4'-phosphopantetheine moiety from coenzyme A to a Ser of acyl-carrier-protein. In Roseiflexus castenholzii (strain DSM 13941 / HLO8), this protein is Holo-[acyl-carrier-protein] synthase.